Consider the following 264-residue polypeptide: Shikimate dehydrogenase (NADP(+)) (264 aa).

Shikimate contacts are provided by residues 14–16 and Thr-59; that span reads SLS. Lys-63 serves as the catalytic Proton acceptor. Glu-75 serves as a coordination point for NADP(+). The shikimate site is built by Asn-84 and Asp-99. NADP(+)-binding positions include 122-126, 144-149, and Ile-205; these read GAGGA and NRTPSK. Tyr-207 lines the shikimate pocket. An NADP(+)-binding site is contributed by Gly-228.

It belongs to the shikimate dehydrogenase family. In terms of assembly, homodimer.

It catalyses the reaction shikimate + NADP(+) = 3-dehydroshikimate + NADPH + H(+). It functions in the pathway metabolic intermediate biosynthesis; chorismate biosynthesis; chorismate from D-erythrose 4-phosphate and phosphoenolpyruvate: step 4/7. Involved in the biosynthesis of the chorismate, which leads to the biosynthesis of aromatic amino acids. Catalyzes the reversible NADPH linked reduction of 3-dehydroshikimate (DHSA) to yield shikimate (SA). The polypeptide is Shikimate dehydrogenase (NADP(+)) (Pyrococcus abyssi (strain GE5 / Orsay)).